Here is an 81-residue protein sequence, read N- to C-terminus: Photosystem I iron-sulfur center (81 aa).

2 consecutive 4Fe-4S ferredoxin-type domains span residues 2–31 and 39–68; these read SHTVKIYDTCIGCTQCVRACPTDVLEMVPW and IASSPRTEDCVGCKRCETACPTDFLSIRVY. Cysteine 11, cysteine 14, cysteine 17, cysteine 21, cysteine 48, cysteine 51, cysteine 54, and cysteine 58 together coordinate [4Fe-4S] cluster.

The cyanobacterial PSI reaction center is composed of one copy each of PsaA,B,C,D,E,F,I,J,K,L,M and X, and forms trimeric complexes. The cofactor is [4Fe-4S] cluster.

It localises to the cellular thylakoid membrane. The catalysed reaction is reduced [plastocyanin] + hnu + oxidized [2Fe-2S]-[ferredoxin] = oxidized [plastocyanin] + reduced [2Fe-2S]-[ferredoxin]. Functionally, apoprotein for the two 4Fe-4S centers FA and FB of photosystem I (PSI); essential for photochemical activity. FB is the terminal electron acceptor of PSI, donating electrons to ferredoxin. The C-terminus interacts with PsaA/B/D and helps assemble the protein into the PSI complex. Required for binding of PsaD and PsaE to PSI. PSI is a plastocyanin/cytochrome c6-ferredoxin oxidoreductase, converting photonic excitation into a charge separation, which transfers an electron from the donor P700 chlorophyll pair to the spectroscopically characterized acceptors A0, A1, FX, FA and FB in turn. The chain is Photosystem I iron-sulfur center from Mastigocladus laminosus (Fischerella sp.).